A 360-amino-acid chain; its full sequence is Phospho-N-acetylmuramoyl-pentapeptide-transferase (360 aa).

10 helical membrane-spanning segments follow: residues 21–41, 74–94, 97–117, 134–154, 168–188, 199–219, 236–256, 263–283, 288–308, and 338–358; these read YVTF…LWWG, MGGI…GDLG, YVWV…IDDY, YILQ…SADM, IMPQ…VGSS, GLAI…AYLS, AGEL…FLWF, VFMG…IAVL, ILLV…ILQV, and VIVR…ATLK.

The protein belongs to the glycosyltransferase 4 family. MraY subfamily. It depends on Mg(2+) as a cofactor.

It localises to the cell inner membrane. The catalysed reaction is UDP-N-acetyl-alpha-D-muramoyl-L-alanyl-gamma-D-glutamyl-meso-2,6-diaminopimeloyl-D-alanyl-D-alanine + di-trans,octa-cis-undecaprenyl phosphate = di-trans,octa-cis-undecaprenyl diphospho-N-acetyl-alpha-D-muramoyl-L-alanyl-D-glutamyl-meso-2,6-diaminopimeloyl-D-alanyl-D-alanine + UMP. It functions in the pathway cell wall biogenesis; peptidoglycan biosynthesis. In terms of biological role, catalyzes the initial step of the lipid cycle reactions in the biosynthesis of the cell wall peptidoglycan: transfers peptidoglycan precursor phospho-MurNAc-pentapeptide from UDP-MurNAc-pentapeptide onto the lipid carrier undecaprenyl phosphate, yielding undecaprenyl-pyrophosphoryl-MurNAc-pentapeptide, known as lipid I. In Shewanella woodyi (strain ATCC 51908 / MS32), this protein is Phospho-N-acetylmuramoyl-pentapeptide-transferase.